The primary structure comprises 163 residues: Lipoprotein signal peptidase (163 aa).

The next 3 membrane-spanning stretches (helical) occupy residues Ile-3 to Leu-23, Asn-70 to Asn-90, and Ile-94 to Phe-114. Catalysis depends on residues Asp-125 and Asp-143. Residues Trp-134–Ile-154 form a helical membrane-spanning segment.

The protein belongs to the peptidase A8 family.

The protein resides in the cell membrane. The catalysed reaction is Release of signal peptides from bacterial membrane prolipoproteins. Hydrolyzes -Xaa-Yaa-Zaa-|-(S,diacylglyceryl)Cys-, in which Xaa is hydrophobic (preferably Leu), and Yaa (Ala or Ser) and Zaa (Gly or Ala) have small, neutral side chains.. It participates in protein modification; lipoprotein biosynthesis (signal peptide cleavage). Its function is as follows. This protein specifically catalyzes the removal of signal peptides from prolipoproteins. The sequence is that of Lipoprotein signal peptidase from Buchnera aphidicola subsp. Baizongia pistaciae (strain Bp).